Reading from the N-terminus, the 318-residue chain is Protein-methionine-sulfoxide reductase catalytic subunit MsrP (318 aa).

The segment at residues 1 to 40 is a signal peptide (tat-type signal); it reads MKQLMMSDVTPEEIFNQRRQIIKSMGLGIATLGLPNIAFA. Mo-molybdopterin-binding positions include Asn72, 75–76, Cys130, Thr165, Asn217, Arg222, and 233–235; these read YE and SIK.

This sequence belongs to the MsrP family. In terms of assembly, heterodimer of a catalytic subunit (MsrP) and a heme-binding subunit (MsrQ). Mo-molybdopterin is required as a cofactor. Predicted to be exported by the Tat system. The position of the signal peptide cleavage has not been experimentally proven.

Its subcellular location is the periplasm. It catalyses the reaction L-methionyl-[protein] + a quinone + H2O = L-methionyl-(S)-S-oxide-[protein] + a quinol. The enzyme catalyses L-methionyl-[protein] + a quinone + H2O = L-methionyl-(R)-S-oxide-[protein] + a quinol. Its function is as follows. Part of the MsrPQ system that repairs oxidized periplasmic proteins containing methionine sulfoxide residues (Met-O), using respiratory chain electrons. Thus protects these proteins from oxidative-stress damage caused by reactive species of oxygen and chlorine generated by the host defense mechanisms. MsrPQ is essential for the maintenance of envelope integrity under bleach stress, rescuing a wide series of structurally unrelated periplasmic proteins from methionine oxidation. The catalytic subunit MsrP is non-stereospecific, being able to reduce both (R-) and (S-) diastereoisomers of methionine sulfoxide. This Haemophilus ducreyi (strain 35000HP / ATCC 700724) protein is Protein-methionine-sulfoxide reductase catalytic subunit MsrP.